The sequence spans 99 residues: UPF0235 protein Sbal_3028 (99 aa).

This sequence belongs to the UPF0235 family.

The protein is UPF0235 protein Sbal_3028 of Shewanella baltica (strain OS155 / ATCC BAA-1091).